The following is a 242-amino-acid chain: Neuromodulin (242 aa).

The tract at residues 1–242 is disordered; that stretch reads MLCCMRRTKQ…EEREADQEHA (242 aa). S-palmitoyl cysteine attachment occurs at residues Cys3 and Cys4. A compositionally biased stretch (basic and acidic residues) spans 9 to 32; the sequence is KQVEKNDEDQKIEQDGIKPEDKAH. The 30-residue stretch at 31-60 folds into the IQ domain; it reads AHKAATKIQASFRGHITRKKLKGEKKGDAQ. At Ser41 the chain carries Phosphoserine; by PHK and PKC. 2 stretches are compositionally biased toward basic and acidic residues: residues 66 to 84 and 98 to 117; these read GNEKDEAPVADGVEKKEGE and KAEETGKAGETPSEEKKGEG. The span at 142–157 shows a compositional bias: polar residues; the sequence is ETESATKASTDNSPSS. 3 positions are modified to phosphoserine: Ser154, Ser156, and Ser157. Over residues 158 to 170 the composition is skewed to basic and acidic residues; it reads KAEDAPAKEEPKQ. The segment covering 171–203 has biased composition (low complexity); sequence ADVPAAVTAAAAATTPAAEDAAAKATAQPPTDA. Phosphothreonine is present on Thr185. Phosphoserine; by CK2 is present on residues Ser206 and Ser207. Over residues 209–242 the composition is skewed to basic and acidic residues; that stretch reads AEEKIEAVDETKPKESARQDEGKGEEREADQEHA.

It belongs to the neuromodulin family. Identified in a complex containing FGFR4, NCAM1, CDH2, PLCG1, FRS2, SRC, SHC1, GAP43 and CTTN. Interacts (via IQ domain) with calmodulin. Binds calmodulin with a greater affinity in the absence of Ca(2+) than in its presence. Post-translationally, phosphorylated. Phosphorylation of this protein by a protein kinase C is specifically correlated with certain forms of synaptic plasticity. In terms of processing, palmitoylated by ZDHHC3. Palmitoylation is regulated by ARF6 and is essential for plasma membrane association and axonal and dendritic filopodia induction. Deacylated by LYPLA2.

It is found in the cell membrane. The protein localises to the cell projection. It localises to the growth cone membrane. Its subcellular location is the synapse. The protein resides in the filopodium membrane. It is found in the perikaryon. The protein localises to the dendrite. It localises to the axon. Its subcellular location is the cytoplasm. Functionally, this protein is associated with nerve growth. It is a major component of the motile 'growth cones' that form the tips of elongating axons. Plays a role in axonal and dendritic filopodia induction. The protein is Neuromodulin (GAP43) of Felis catus (Cat).